Consider the following 254-residue polypeptide: RNA polymerase sigma-D factor (254 aa).

The Polymerase core binding signature appears at 54–67 (DLMSLGMLGLYDAL). Residues 220-239 (LTEIGQVLNLSTSRISQIHS) constitute a DNA-binding region (H-T-H motif).

In terms of assembly, monomer. Interacts transiently with the RNAP core.

Functionally, sigma factors are initiation factors that promote the attachment of RNA polymerase (RNAP) to specific initiation sites and are then released. This alternative sigma factor is required for the transcription of the flagellin and motility genes as well as for wild-type chemotaxis. Associates with the RNAP core during all growth phases with a peak at the transition to stationary phase. In Bacillus subtilis (strain 168), this protein is RNA polymerase sigma-D factor (sigD).